The primary structure comprises 234 residues: Large ribosomal subunit protein uL1 (234 aa).

This sequence belongs to the universal ribosomal protein uL1 family. In terms of assembly, part of the 50S ribosomal subunit.

In terms of biological role, binds directly to 23S rRNA. The L1 stalk is quite mobile in the ribosome, and is involved in E site tRNA release. Protein L1 is also a translational repressor protein, it controls the translation of the L11 operon by binding to its mRNA. The protein is Large ribosomal subunit protein uL1 of Klebsiella pneumoniae subsp. pneumoniae (strain ATCC 700721 / MGH 78578).